A 280-amino-acid polypeptide reads, in one-letter code: Pantothenate synthetase (280 aa).

Position 30–37 (30–37 (MGALHRGH)) interacts with ATP. His-37 (proton donor) is an active-site residue. Gln-61 contributes to the (R)-pantoate binding site. Gln-61 serves as a coordination point for beta-alanine. Position 148–151 (148–151 (GEKD)) interacts with ATP. Gln-154 contributes to the (R)-pantoate binding site. ATP-binding positions include Val-177 and 185–188 (LSSR).

This sequence belongs to the pantothenate synthetase family. In terms of assembly, homodimer.

It is found in the cytoplasm. The catalysed reaction is (R)-pantoate + beta-alanine + ATP = (R)-pantothenate + AMP + diphosphate + H(+). The protein operates within cofactor biosynthesis; (R)-pantothenate biosynthesis; (R)-pantothenate from (R)-pantoate and beta-alanine: step 1/1. Functionally, catalyzes the condensation of pantoate with beta-alanine in an ATP-dependent reaction via a pantoyl-adenylate intermediate. The sequence is that of Pantothenate synthetase from Azobacteroides pseudotrichonymphae genomovar. CFP2.